A 652-amino-acid polypeptide reads, in one-letter code: Acetolactate synthase 3, chloroplastic (652 aa).

Residues 1–20 (MAAATSSSPISLTAKPSSKS) are compositionally biased toward polar residues. Residues 1 to 23 (MAAATSSSPISLTAKPSSKSPLP) form a disordered region. The N-terminal 69 residues, 1-69 (MAAATSSSPI…PEKTDKIKTF (69 aa)), are a transit peptide targeting the chloroplast. Position 126 (glutamate 126) interacts with thiamine diphosphate. FAD is bound by residues arginine 228, 334–355 (HGTV…FGVR), and 377–396 (DIDS…VCGD). The thiamine pyrophosphate binding stretch occupies residues 469–549 (QHQMWAAQFY…VKILLLNNQH (81 aa)). Positions 520 and 547 each coordinate Mg(2+).

This sequence belongs to the TPP enzyme family. Requires Mg(2+) as cofactor. Thiamine diphosphate serves as cofactor.

The protein resides in the plastid. Its subcellular location is the chloroplast. It carries out the reaction 2 pyruvate + H(+) = (2S)-2-acetolactate + CO2. Its pathway is amino-acid biosynthesis; L-isoleucine biosynthesis; L-isoleucine from 2-oxobutanoate: step 1/4. The protein operates within amino-acid biosynthesis; L-valine biosynthesis; L-valine from pyruvate: step 1/4. The chain is Acetolactate synthase 3, chloroplastic from Brassica napus (Rape).